The following is a 298-amino-acid chain: Protoheme IX farnesyltransferase (298 aa).

Helical transmembrane passes span 26–46, 52–72, 98–118, 120–140, 148–168, 174–194, 214–234, 241–261, and 278–298; these read VVGH…PGVP, FWAS…NHFL, VVGF…AFVN, LTAF…TVYL, IVIG…AVTG, ALLL…AYAI, IAFT…AGLM, SGEI…YYAI, and YSLV…YIVL.

The protein belongs to the UbiA prenyltransferase family. Protoheme IX farnesyltransferase subfamily.

It localises to the cell inner membrane. The enzyme catalyses heme b + (2E,6E)-farnesyl diphosphate + H2O = Fe(II)-heme o + diphosphate. The protein operates within porphyrin-containing compound metabolism; heme O biosynthesis; heme O from protoheme: step 1/1. Functionally, converts heme B (protoheme IX) to heme O by substitution of the vinyl group on carbon 2 of heme B porphyrin ring with a hydroxyethyl farnesyl side group. In Methylococcus capsulatus (strain ATCC 33009 / NCIMB 11132 / Bath), this protein is Protoheme IX farnesyltransferase.